The sequence spans 1225 residues: ATP-dependent helicase/nuclease subunit A (1225 aa).

The UvrD-like helicase ATP-binding domain occupies 11-478; it reads AQWTDAQWKS…IDLSKNFRSR (468 aa). Residue 32–39 participates in ATP binding; sequence AAAGSGKT. The region spanning 479-790 is the UvrD-like helicase C-terminal domain; that stretch reads KEVLATTNYL…RMMTVHSSKG (312 aa). Positions 999 to 1014 are enriched in basic and acidic residues; that stretch reads EKPSKQSVSELKRQLE. Residues 999 to 1018 form a disordered region; sequence EKPSKQSVSELKRQLETEES.

The protein belongs to the helicase family. AddA subfamily. In terms of assembly, heterodimer of AddA and AddB/RexB. Mg(2+) serves as cofactor.

The catalysed reaction is Couples ATP hydrolysis with the unwinding of duplex DNA by translocating in the 3'-5' direction.. It catalyses the reaction ATP + H2O = ADP + phosphate + H(+). The heterodimer acts as both an ATP-dependent DNA helicase and an ATP-dependent, dual-direction single-stranded exonuclease. Recognizes the chi site generating a DNA molecule suitable for the initiation of homologous recombination. The AddA nuclease domain is required for chi fragment generation; this subunit has the helicase and 3' -&gt; 5' nuclease activities. The chain is ATP-dependent helicase/nuclease subunit A from Staphylococcus haemolyticus (strain JCSC1435).